We begin with the raw amino-acid sequence, 551 residues long: Dihydroxy-acid dehydratase (551 aa).

Asp78 is a Mg(2+) binding site. Residue Cys119 coordinates [2Fe-2S] cluster. Residues Asp120 and Lys121 each contribute to the Mg(2+) site. N6-carboxylysine is present on Lys121. Cys191 lines the [2Fe-2S] cluster pocket. Residue Glu441 participates in Mg(2+) binding. Catalysis depends on Ser467, which acts as the Proton acceptor.

Belongs to the IlvD/Edd family. As to quaternary structure, homodimer. It depends on [2Fe-2S] cluster as a cofactor. Mg(2+) is required as a cofactor.

The enzyme catalyses (2R)-2,3-dihydroxy-3-methylbutanoate = 3-methyl-2-oxobutanoate + H2O. The catalysed reaction is (2R,3R)-2,3-dihydroxy-3-methylpentanoate = (S)-3-methyl-2-oxopentanoate + H2O. It participates in amino-acid biosynthesis; L-isoleucine biosynthesis; L-isoleucine from 2-oxobutanoate: step 3/4. It functions in the pathway amino-acid biosynthesis; L-valine biosynthesis; L-valine from pyruvate: step 3/4. Functionally, functions in the biosynthesis of branched-chain amino acids. Catalyzes the dehydration of (2R,3R)-2,3-dihydroxy-3-methylpentanoate (2,3-dihydroxy-3-methylvalerate) into 2-oxo-3-methylpentanoate (2-oxo-3-methylvalerate) and of (2R)-2,3-dihydroxy-3-methylbutanoate (2,3-dihydroxyisovalerate) into 2-oxo-3-methylbutanoate (2-oxoisovalerate), the penultimate precursor to L-isoleucine and L-valine, respectively. The polypeptide is Dihydroxy-acid dehydratase (Pyrococcus furiosus (strain ATCC 43587 / DSM 3638 / JCM 8422 / Vc1)).